The following is a 113-amino-acid chain: 14 kDa zinc-binding protein (113 aa).

Residues 3–113 (IFGKIISKEI…GGRQMNWPPG (111 aa)) enclose the HIT domain. Positions 97 to 101 (HIHVH) match the Histidine triad motif motif.

In terms of assembly, homodimer.

The sequence is that of 14 kDa zinc-binding protein from Brassica juncea (Indian mustard).